The primary structure comprises 246 residues: Probable transcriptional regulatory protein YebC (246 aa).

The tract at residues 1–20 (MAGHSKWANTRHRKAAQDAK) is disordered.

This sequence belongs to the TACO1 family.

Its subcellular location is the cytoplasm. The polypeptide is Probable transcriptional regulatory protein YebC (Shigella boydii serotype 4 (strain Sb227)).